The sequence spans 274 residues: HTH-type transcriptional regulator GadX (274 aa).

One can recognise an HTH araC/xylS-type domain in the interval 145 to 242 (TRVCTVINNN…GMTPTEYQER (98 aa)). 2 consecutive DNA-binding regions (H-T-H motif) follow at residues 162 to 183 (ARIA…REEG) and 209 to 232 (IKRV…RNYY).

In terms of assembly, homodimer.

Its function is as follows. Positively regulates the expression of about fifteen genes involved in acid resistance such as gadA, gadB and gadC. Depending on the conditions (growth phase and medium), can repress gadW. Negatively regulates perA expression in acidic conditions and positively regulates it in alkaline conditions. This is HTH-type transcriptional regulator GadX (gadX) from Escherichia coli O127:H6 (strain E2348/69 / EPEC).